The primary structure comprises 88 residues: MIPRDPRSPAPDLSAINQPAGRAERRSGPATLSASIQSINCCREARVSSSPVNSLRNVVAIAAGIVVSRSSFGMASFSSGSQRSRRVT.

The disordered stretch occupies residues 1 to 31 (MIPRDPRSPAPDLSAINQPAGRAERRSGPAT).

This is an uncharacterized protein from Escherichia coli.